A 132-amino-acid chain; its full sequence is Small ribosomal subunit protein uS8 (132 aa).

This sequence belongs to the universal ribosomal protein uS8 family. As to quaternary structure, part of the 30S ribosomal subunit. Contacts proteins S5 and S12.

One of the primary rRNA binding proteins, it binds directly to 16S rRNA central domain where it helps coordinate assembly of the platform of the 30S subunit. The protein is Small ribosomal subunit protein uS8 of Aliarcobacter butzleri (strain RM4018) (Arcobacter butzleri).